A 235-amino-acid polypeptide reads, in one-letter code: Ribonuclease PH (235 aa).

Residues R86 and 124-126 each bind phosphate; that span reads GTR.

This sequence belongs to the RNase PH family. As to quaternary structure, homohexameric ring arranged as a trimer of dimers.

It carries out the reaction tRNA(n+1) + phosphate = tRNA(n) + a ribonucleoside 5'-diphosphate. Phosphorolytic 3'-5' exoribonuclease that plays an important role in tRNA 3'-end maturation. Removes nucleotide residues following the 3'-CCA terminus of tRNAs; can also add nucleotides to the ends of RNA molecules by using nucleoside diphosphates as substrates, but this may not be physiologically important. Probably plays a role in initiation of 16S rRNA degradation (leading to ribosome degradation) during starvation. The polypeptide is Ribonuclease PH (Francisella tularensis subsp. mediasiatica (strain FSC147)).